A 320-amino-acid chain; its full sequence is Glycerol-3-phosphate dehydrogenase [NAD(P)+] (320 aa).

The NADPH site is built by Phe11, Arg30, and Lys102. Sn-glycerol 3-phosphate contacts are provided by Lys102, Gly130, and Ser132. Position 134 (Ala134) interacts with NADPH. Lys185, Asp238, Ser248, Arg249, and Asn250 together coordinate sn-glycerol 3-phosphate. Catalysis depends on Lys185, which acts as the Proton acceptor. An NADPH-binding site is contributed by Arg249. Glu270 contacts NADPH.

This sequence belongs to the NAD-dependent glycerol-3-phosphate dehydrogenase family.

It localises to the cytoplasm. The catalysed reaction is sn-glycerol 3-phosphate + NAD(+) = dihydroxyacetone phosphate + NADH + H(+). It catalyses the reaction sn-glycerol 3-phosphate + NADP(+) = dihydroxyacetone phosphate + NADPH + H(+). Its pathway is membrane lipid metabolism; glycerophospholipid metabolism. Its function is as follows. Catalyzes the reduction of the glycolytic intermediate dihydroxyacetone phosphate (DHAP) to sn-glycerol 3-phosphate (G3P), the key precursor for phospholipid synthesis. The protein is Glycerol-3-phosphate dehydrogenase [NAD(P)+] of Ruegeria sp. (strain TM1040) (Silicibacter sp.).